The primary structure comprises 606 residues: Lysosomal cobalamin transporter ABCD4 (606 aa).

The 294-residue stretch at 39 to 332 folds into the ABC transmembrane type-1 domain; that stretch reads NALMFLTLLC…CFTQLIDLST (294 aa). 5 helical membrane-spanning segments follow: residues 43 to 63, 76 to 96, 190 to 210, 279 to 299, and 314 to 334; these read FLTLLCLTLLEQFVIYQVGLI, LEGFKTLTFLAVMLIVLNSTL, IFGYFILGTVVNKTLMGPIVM, YLGSILSYVVIAIPIFSGVYG, and AFVCIYLISCFTQLIDLSTTL. Residues 389–603 enclose the ABC transporter domain; that stretch reads LERVSISAPS…GGGRWELMRI (215 aa). 421-428 contacts ATP; that stretch reads GNTGTGKT.

The protein belongs to the ABC transporter superfamily. ABCD family. Peroxisomal fatty acyl CoA transporter (TC 3.A.1.203) subfamily. Homodimer or heterodimer. Interacts with LMBRD1; this interaction induces the translocation of ABCD4 from the ER to the lysosome membrane. Interacts with LMBRD1 and MMACHC; this interaction ensures the transport of cobalamin from the lysosome to the cytosol. As to expression, ubiquitous.

The protein localises to the endoplasmic reticulum membrane. Its subcellular location is the lysosome membrane. The enzyme catalyses an R-cob(III)alamin(out) + ATP + H2O = an R-cob(III)alamin(in) + ADP + phosphate + H(+). Its function is as follows. Lysosomal membrane protein that transports cobalamin (Vitamin B12) from the lysosomal lumen to the cytosol in an ATP-dependent manner. Targeted by LMBRD1 lysosomal chaperone from the endoplasmic reticulum to the lysosomal membrane. Then forms a complex with lysosomal chaperone LMBRD1 and cytosolic MMACHC to transport cobalamin across the lysosomal membrane. This chain is Lysosomal cobalamin transporter ABCD4, found in Homo sapiens (Human).